The sequence spans 108 residues: Small ribosomal subunit protein uS10 (108 aa).

It belongs to the universal ribosomal protein uS10 family. In terms of assembly, part of the 30S ribosomal subunit.

In terms of biological role, involved in the binding of tRNA to the ribosomes. This chain is Small ribosomal subunit protein uS10, found in Rhodopirellula baltica (strain DSM 10527 / NCIMB 13988 / SH1).